Consider the following 339-residue polypeptide: Phenylalanine--tRNA ligase alpha subunit (339 aa).

Glu-254 serves as a coordination point for Mg(2+).

It belongs to the class-II aminoacyl-tRNA synthetase family. Phe-tRNA synthetase alpha subunit type 1 subfamily. As to quaternary structure, tetramer of two alpha and two beta subunits. The cofactor is Mg(2+).

It is found in the cytoplasm. The enzyme catalyses tRNA(Phe) + L-phenylalanine + ATP = L-phenylalanyl-tRNA(Phe) + AMP + diphosphate + H(+). This is Phenylalanine--tRNA ligase alpha subunit from Clostridium kluyveri (strain ATCC 8527 / DSM 555 / NBRC 12016 / NCIMB 10680 / K1).